An 86-amino-acid chain; its full sequence is Molybdopterin synthase sulfur carrier subunit (86 aa).

The residue at position 86 (Gly-86) is a 1-thioglycine; alternate. Gly-86 is modified (glycyl adenylate; alternate).

This sequence belongs to the MoaD family. MOCS2A subfamily. Heterotetramer; composed of 2 small (mocs2s) and 2 large (mocs2l) subunits. In terms of processing, C-terminal thiocarboxylation occurs in 2 steps, it is first acyl-adenylated (-COAMP) via the hesA/moeB/thiF part of mocs3, then thiocarboxylated (-COSH) via the rhodanese domain of mocs3.

The protein resides in the cytoplasm. The protein operates within cofactor biosynthesis; molybdopterin biosynthesis. In terms of biological role, acts as a sulfur carrier required for molybdopterin biosynthesis. Component of the molybdopterin synthase complex that catalyzes the conversion of precursor Z into molybdopterin by mediating the incorporation of 2 sulfur atoms into precursor Z to generate a dithiolene group. In the complex, serves as sulfur donor by being thiocarboxylated (-COSH) at its C-terminus by mocs3. After interaction with mocs2l, the sulfur is then transferred to precursor Z to form molybdopterin. The chain is Molybdopterin synthase sulfur carrier subunit (mocs2s) from Dictyostelium discoideum (Social amoeba).